Reading from the N-terminus, the 110-residue chain is Large ribosomal subunit protein uL22 (110 aa).

The protein belongs to the universal ribosomal protein uL22 family. As to quaternary structure, part of the 50S ribosomal subunit.

In terms of biological role, this protein binds specifically to 23S rRNA; its binding is stimulated by other ribosomal proteins, e.g. L4, L17, and L20. It is important during the early stages of 50S assembly. It makes multiple contacts with different domains of the 23S rRNA in the assembled 50S subunit and ribosome. Its function is as follows. The globular domain of the protein is located near the polypeptide exit tunnel on the outside of the subunit, while an extended beta-hairpin is found that lines the wall of the exit tunnel in the center of the 70S ribosome. In Acidovorax ebreus (strain TPSY) (Diaphorobacter sp. (strain TPSY)), this protein is Large ribosomal subunit protein uL22.